Reading from the N-terminus, the 240-residue chain is Serine protease SplB (240 aa).

The first 36 residues, 1–36, serve as a signal peptide directing secretion; that stretch reads MNKNVVIKSLATLTILTSVAGIGTTLVEEVQQTAKA. Active-site charge relay system residues include His-75, Asp-113, and Ser-193.

This sequence belongs to the peptidase S1B family.

The protein localises to the secreted. Serine protease that cleaves specifically after the sequence Trp-Glu-Leu-Gln. This chain is Serine protease SplB (splB), found in Staphylococcus aureus (strain bovine RF122 / ET3-1).